The chain runs to 111 residues: WAP four-disulfide core domain protein 12 (111 aa).

An N-terminal signal peptide occupies residues 1 to 23 (MGSSSFLVLMVSLALVTLVAAEG). Residues 27–74 (NIEKPGVCPADNIRCIKSDPPQCHTDQDCQGIRKCCYLHCGFKCVIPV) form the WAP domain. Cystine bridges form between Cys34/Cys62, Cys41/Cys66, Cys49/Cys61, and Cys55/Cys70. The interval 80-111 (GGNKDEDVSRPCPEPGWEAKPPGVFSTRCPQK) is disordered.

It is found in the secreted. In terms of biological role, antibacterial protein. Putative acid-stable proteinase inhibitor. In Callithrix jacchus (White-tufted-ear marmoset), this protein is WAP four-disulfide core domain protein 12 (WFDC12).